Reading from the N-terminus, the 340-residue chain is Mitochondrial distribution and morphology protein 12 (340 aa).

The SMP-LTD domain maps to 1 to 321 (MSIDLDWDGM…WPSWIKVSME (321 aa)). Disordered regions lie at residues 79–107 (HYLPPLHPPQQRRSAPSTPHIHTNTTNPI), 161–184 (SVRESTAPRTPEEREQQPVPEDRE), and 319–340 (SMEDEDSDDEEGEEEGDQEDEH). Residues 89 to 106 (QRRSAPSTPHIHTNTTNP) are compositionally biased toward polar residues. Over residues 321-340 (EDEDSDDEEGEEEGDQEDEH) the composition is skewed to acidic residues.

It belongs to the MDM12 family. In terms of assembly, component of the ER-mitochondria encounter structure (ERMES) or MDM complex, composed of MMM1, MDM10, MDM12 and MDM34. An MMM1 homodimer associates with one molecule of MDM12 on each side in a pairwise head-to-tail manner, and the SMP-LTD domains of MMM1 and MDM12 generate a continuous hydrophobic tunnel for phospholipid trafficking.

It localises to the mitochondrion outer membrane. The protein localises to the endoplasmic reticulum membrane. Functionally, component of the ERMES/MDM complex, which serves as a molecular tether to connect the endoplasmic reticulum (ER) and mitochondria. Components of this complex are involved in the control of mitochondrial shape and protein biogenesis, and function in nonvesicular lipid trafficking between the ER and mitochondria. MDM12 is required for the interaction of the ER-resident membrane protein MMM1 and the outer mitochondrial membrane-resident beta-barrel protein MDM10. The MDM12-MMM1 subcomplex functions in the major beta-barrel assembly pathway that is responsible for biogenesis of all mitochondrial outer membrane beta-barrel proteins, and acts in a late step after the SAM complex. The MDM10-MDM12-MMM1 subcomplex further acts in the TOM40-specific pathway after the action of the MDM12-MMM1 complex. Essential for establishing and maintaining the structure of mitochondria and maintenance of mtDNA nucleoids. This is Mitochondrial distribution and morphology protein 12 from Yarrowia lipolytica (strain CLIB 122 / E 150) (Yeast).